We begin with the raw amino-acid sequence, 88 residues long: Ribonuclease P protein component 1 (88 aa).

It belongs to the eukaryotic/archaeal RNase P protein component 1 family. Consists of a catalytic RNA component and at least 4-5 protein subunits.

It is found in the cytoplasm. It catalyses the reaction Endonucleolytic cleavage of RNA, removing 5'-extranucleotides from tRNA precursor.. In terms of biological role, part of ribonuclease P, a protein complex that generates mature tRNA molecules by cleaving their 5'-ends. This Nitrosopumilus maritimus (strain SCM1) protein is Ribonuclease P protein component 1.